The primary structure comprises 166 residues: Lipoprotein signal peptidase (166 aa).

4 consecutive transmembrane segments (helical) span residues 9–29, 37–57, 71–91, and 100–120; these read AGGSLAPWLGVAVIVILFDQL, VFAYGSSHAIAPFFNLVLVYN, WQRWAFTALGVAAAVLICYLL, and FCTALALIMGGAIGNVIDRLL. Residues Asp-126 and Asp-144 contribute to the active site. Residues 136-156 form a helical membrane-spanning segment; sequence HWPAFNLADSAITIGAALLVF.

This sequence belongs to the peptidase A8 family.

It is found in the cell inner membrane. It catalyses the reaction Release of signal peptides from bacterial membrane prolipoproteins. Hydrolyzes -Xaa-Yaa-Zaa-|-(S,diacylglyceryl)Cys-, in which Xaa is hydrophobic (preferably Leu), and Yaa (Ala or Ser) and Zaa (Gly or Ala) have small, neutral side chains.. It functions in the pathway protein modification; lipoprotein biosynthesis (signal peptide cleavage). Functionally, this protein specifically catalyzes the removal of signal peptides from prolipoproteins. The sequence is that of Lipoprotein signal peptidase from Paraburkholderia phymatum (strain DSM 17167 / CIP 108236 / LMG 21445 / STM815) (Burkholderia phymatum).